We begin with the raw amino-acid sequence, 303 residues long: MSQKKSFQGLILTLQEFWAAQGCVILQPYDMEVGAGTFHPATTLRALGPKPWKAAYVQPSRRPKDGRYGENPNRLQHYYQFQVILKPNPPNLQELYLASLAAIGVDLKLHDIRFVEDDWESPTLGAWGLGWECWCDGMEVSQFTYFQQVAGFECAPVAGELTYGLERLAMYVQGVENVYDLDFNGAEGPDRITYGDVFLQAEQEYSRHNFEAADTAMLFRQFTDAEAACRSYLAAGAPDAEGARHRMAQPAYDQCIKASHVFNLLDARGVISVTERQSYILRVRELAKACGAAWLKTAAGGAP.

Belongs to the class-II aminoacyl-tRNA synthetase family. Tetramer of two alpha and two beta subunits.

It is found in the cytoplasm. The catalysed reaction is tRNA(Gly) + glycine + ATP = glycyl-tRNA(Gly) + AMP + diphosphate. In Methylobacterium radiotolerans (strain ATCC 27329 / DSM 1819 / JCM 2831 / NBRC 15690 / NCIMB 10815 / 0-1), this protein is Glycine--tRNA ligase alpha subunit.